We begin with the raw amino-acid sequence, 511 residues long: GMP synthase [glutamine-hydrolyzing] (511 aa).

The Glutamine amidotransferase type-1 domain occupies 3 to 193 (KILILDFGGQ…VYSICDVAGD (191 aa)). Cys80 (nucleophile) is an active-site residue. Catalysis depends on residues His167 and Glu169. A GMPS ATP-PPase domain is found at 194 to 384 (WEPKNIKLEK…LDIPYQNVYR (191 aa)). 221-227 (SGGVDSL) is an ATP binding site.

As to quaternary structure, homodimer.

The enzyme catalyses XMP + L-glutamine + ATP + H2O = GMP + L-glutamate + AMP + diphosphate + 2 H(+). It functions in the pathway purine metabolism; GMP biosynthesis; GMP from XMP (L-Gln route): step 1/1. In terms of biological role, catalyzes the synthesis of GMP from XMP. This chain is GMP synthase [glutamine-hydrolyzing], found in Malacoplasma penetrans (strain HF-2) (Mycoplasma penetrans).